A 497-amino-acid polypeptide reads, in one-letter code: Long chain base biosynthesis protein 2c (497 aa).

A helical transmembrane segment spans residues 4–24; it reads VPFVTAVTTVFSYGVIFGFGH. Lysine 319 bears the N6-(pyridoxal phosphate)lysine mark.

Belongs to the class-II pyridoxal-phosphate-dependent aminotransferase family. Heterodimer with LCB1. Component of the serine palmitoyltransferase (SPT) complex, composed of LCB1 and LCB2. It depends on pyridoxal 5'-phosphate as a cofactor.

Its subcellular location is the endoplasmic reticulum membrane. It catalyses the reaction L-serine + hexadecanoyl-CoA + H(+) = 3-oxosphinganine + CO2 + CoA. Its pathway is lipid metabolism; sphingolipid metabolism. Functionally, serine palmitoyltransferase (SPT). The heterodimer formed with LCB1 constitutes the catalytic core. This chain is Long chain base biosynthesis protein 2c, found in Oryza sativa subsp. japonica (Rice).